A 224-amino-acid chain; its full sequence is MSVINFTGSSGPLVKVCGLQSTEAAECALDSDADLLGIICVPNRKRTIDPVIARKISSLVKAYKNSSGTPKYLVGVFRNQPKEDVLALVNDYGIDIVQLHGDESWQEYQEFLGLPVIKRLVFPKDCNILLSAASQKPHSFIPLFDSEAGGTGELLDWNSISDWVGRQESPESLHFMLAGGLTPENVGDALRLNGVIGVDVSGGVETNGVKDSNKIANFVKNAKK.

The protein belongs to the TrpF family.

It catalyses the reaction N-(5-phospho-beta-D-ribosyl)anthranilate = 1-(2-carboxyphenylamino)-1-deoxy-D-ribulose 5-phosphate. The protein operates within amino-acid biosynthesis; L-tryptophan biosynthesis; L-tryptophan from chorismate: step 3/5. This is N-(5'-phosphoribosyl)anthranilate isomerase (TRP1) from Saccharomyces cerevisiae (strain ATCC 204508 / S288c) (Baker's yeast).